The following is a 919-amino-acid chain: Plasma membrane ATPase 1 (919 aa).

Residues M1–P16 show a composition bias toward basic and acidic residues. Positions M1–V73 are disordered. Residues M1 to K113 lie on the Cytoplasmic side of the membrane. Over residues Q34–D63 the composition is skewed to acidic residues. Position 89 is a phosphoserine (S89). A helical transmembrane segment spans residues F114–A134. Topologically, residues G135–D138 are extracellular. The chain crosses the membrane as a helical span at residues W139–V158. The Cytoplasmic portion of the chain corresponds to Q159–N289. The helical transmembrane segment at G290–F311 threads the bilayer. At Y312–E322 the chain is on the extracellular side. A helical membrane pass occupies residues Y323 to A345. At V346 to L717 the chain is on the cytoplasmic side. D376 acts as the 4-aspartylphosphate intermediate in catalysis. A Phosphoserine modification is found at S494. D632 and D636 together coordinate Mg(2+). A helical transmembrane segment spans residues E718–Y736. Topologically, residues D737 to R752 are extracellular. Residues L753–N772 form a helical membrane-spanning segment. At T773 to Q824 the chain is on the cytoplasmic side. Residues L825–F845 traverse the membrane as a helical segment. Over K846–R858 the chain is Extracellular. The chain crosses the membrane as a helical span at residues I859–Y875. The Cytoplasmic segment spans residues I876–A919. S899 carries the phosphoserine modification.

It belongs to the cation transport ATPase (P-type) (TC 3.A.3) family. Type IIIA subfamily.

Its subcellular location is the cell membrane. It carries out the reaction ATP + H2O + H(+)(in) = ADP + phosphate + 2 H(+)(out). Its function is as follows. The plasma membrane ATPase of plants and fungi is a hydrogen ion pump. The proton gradient it generates drives the active transport of nutrients by H(+)-symport. The resulting external acidification and/or internal alkinization may mediate growth responses. This chain is Plasma membrane ATPase 1 (pma1), found in Schizosaccharomyces pombe (strain 972 / ATCC 24843) (Fission yeast).